A 999-amino-acid chain; its full sequence is P3N-PIPO polyprotein (999 aa).

Residues 176–317 form the Peptidase S30 domain; sequence LKKAVGSGKV…LDNVYTIEHY (142 aa). Active-site for P1 proteinase activity residues include His230, Glu239, and Ser271. The Involved in interaction with stylet and aphid transmission signature appears at 370 to 373; sequence KLSC. Residues 626–628 carry the Involved in virions binding and aphid transmission motif; it reads PTK. Residues 652-774 form the Peptidase C6 domain; it reads MYIAKEGYCY…EGEMKHYRVG (123 aa). Catalysis depends on for helper component proteinase activity residues Cys660 and His733.

It belongs to the potyviridae P3N-PIPO polyprotein family. As to quaternary structure, interacts (via PIPO domain) with host PCaP1 protein; this interaction may help to anchor the movement complex to the plasma membrane from which the complex could move to the plasmodesmata. Post-translationally, potyviral RNA is expressed as two polyproteins which undergo post-translational proteolytic processing. Genome polyprotein is processed by NIa-pro, P1 and HC-pro proteinases resulting in the production of at least ten individual proteins. P3N-PIPO is cleaved by P1 and HC-pro proteinases resulting in the production of three individual proteins. The P1 proteinase and the HC-pro cleave only their respective C-termini autocatalytically.

It localises to the host cell junction. It is found in the host plasmodesma. The catalysed reaction is Hydrolyzes a Gly-|-Gly bond at its own C-terminus, commonly in the sequence -Tyr-Xaa-Val-Gly-|-Gly, in the processing of the potyviral polyprotein.. In terms of biological role, required for aphid transmission and also has proteolytic activity. Only cleaves a Gly-Gly dipeptide at its own C-terminus. Interacts with virions and aphid stylets. Acts as a suppressor of RNA-mediated gene silencing, also known as post-transcriptional gene silencing (PTGS), a mechanism of plant viral defense that limits the accumulation of viral RNAs. May have RNA-binding activity. Functionally, allows efficient cell to cell propagation, by bypassing the host cell wall barrier. Transports viral genome to neighboring plant cells directly through plasmosdesmata, without any budding. The sequence is that of P3N-PIPO polyprotein from Phaseolus vulgaris (Kidney bean).